An 85-amino-acid chain; its full sequence is Large ribosomal subunit protein bL27 (85 aa).

Positions 1–20 (MATKKAGGSTRNGRDSEAKR) are disordered.

This sequence belongs to the bacterial ribosomal protein bL27 family.

In Actinobacillus succinogenes (strain ATCC 55618 / DSM 22257 / CCUG 43843 / 130Z), this protein is Large ribosomal subunit protein bL27.